Reading from the N-terminus, the 66-residue chain is MMFPVRCFTCGAPIGHLWEEFKKRVEAGEDPGKVLDDLGVKRYCCRRMFLSHIEISYEILNFPKVS.

Zn(2+) is bound by residues Cys-7, Cys-10, Cys-44, and Cys-45.

It belongs to the archaeal Rpo10/eukaryotic RPB10 RNA polymerase subunit family. In terms of assembly, part of the RNA polymerase complex. Zn(2+) serves as cofactor.

The protein resides in the cytoplasm. It catalyses the reaction RNA(n) + a ribonucleoside 5'-triphosphate = RNA(n+1) + diphosphate. DNA-dependent RNA polymerase (RNAP) catalyzes the transcription of DNA into RNA using the four ribonucleoside triphosphates as substrates. The sequence is that of DNA-directed RNA polymerase subunit Rpo10 from Staphylothermus marinus (strain ATCC 43588 / DSM 3639 / JCM 9404 / F1).